The chain runs to 368 residues: 3-dehydroquinate synthase (368 aa).

Residues 71–76 (DGEAAK), 105–109 (GATTD), 129–130 (TT), Lys142, and Lys151 each bind NAD(+). Zn(2+)-binding residues include Glu184, His247, and His263.

This sequence belongs to the sugar phosphate cyclases superfamily. Dehydroquinate synthase family. Requires Co(2+) as cofactor. It depends on Zn(2+) as a cofactor. NAD(+) serves as cofactor.

The protein localises to the cytoplasm. It carries out the reaction 7-phospho-2-dehydro-3-deoxy-D-arabino-heptonate = 3-dehydroquinate + phosphate. It participates in metabolic intermediate biosynthesis; chorismate biosynthesis; chorismate from D-erythrose 4-phosphate and phosphoenolpyruvate: step 2/7. In terms of biological role, catalyzes the conversion of 3-deoxy-D-arabino-heptulosonate 7-phosphate (DAHP) to dehydroquinate (DHQ). The polypeptide is 3-dehydroquinate synthase (Thermobifida fusca (strain YX)).